The primary structure comprises 557 residues: Inositol-3-phosphate synthase 1 (557 aa).

Positions 67, 68, 69, 70, 141, 177, 178, 188, 191, 228, 229, 230, 231, 278, 279, 303, 306, 337, 338, 339, and 352 each coordinate NAD(+). Ser-279 carries the phosphoserine modification. Ser-357 bears the Phosphoserine mark. NAD(+)-binding residues include Gly-390, Asp-391, Asp-419, and Ser-420. The interval 512–557 (GPGIKPGEVVATSPLPCKKEPTPATNGCTGDANGHPQAPTPKLSTA) is disordered. Phosphoserine is present on Ser-524.

Belongs to the myo-inositol 1-phosphate synthase family. It depends on NAD(+) as a cofactor. In terms of tissue distribution, in testis, it is expressed in Sertoli cells. Highly expressed in 2 types of germ cells, pachytene spermatocytes and round spermatids.

Its subcellular location is the cytoplasm. It catalyses the reaction D-glucose 6-phosphate = 1D-myo-inositol 3-phosphate. It functions in the pathway polyol metabolism; myo-inositol biosynthesis; myo-inositol from D-glucose 6-phosphate: step 1/2. Functionally, key enzyme in myo-inositol biosynthesis pathway that catalyzes the conversion of glucose 6-phosphate to 1-myo-inositol 1-phosphate in a NAD-dependent manner. Rate-limiting enzyme in the synthesis of all inositol-containing compounds. This chain is Inositol-3-phosphate synthase 1 (Isyna1), found in Mus musculus (Mouse).